The following is a 416-amino-acid chain: Doublesex- and mab-3-related transcription factor A2 (416 aa).

Positions 25–72 form a DNA-binding region, DM; sequence CARCRNHGVVSALKGHKRYCRWKDCMCAKCTLIAERQRVMAAQVALRR. Residues 131 to 154 are compositionally biased toward polar residues; it reads FSKGQLSGPTTPQQAAGKSASAES. A disordered region spans residues 131 to 226; the sequence is FSKGQLSGPT…PSPSSAASRH (96 aa). The segment covering 197–207 has biased composition (low complexity); it reads GSVSSIGSDSG. A DMA domain is found at 227-262; that stretch reads MNAIDILTRVFPSHKRSILELVLQGCGKDVVQAIEQ.

The protein belongs to the DMRT family.

It localises to the nucleus. In terms of biological role, may be involved in sexual development. This Takifugu rubripes (Japanese pufferfish) protein is Doublesex- and mab-3-related transcription factor A2 (dmrta2).